The sequence spans 349 residues: Hydroxymethylglutaryl-CoA synthase (349 aa).

2 residues coordinate (3S)-3-hydroxy-3-methylglutaryl-CoA: Asp-29 and Ala-30. Residue Glu-81 is the Proton donor/acceptor of the active site. (3S)-3-hydroxy-3-methylglutaryl-CoA-binding residues include Cys-113 and Thr-154. Cys-113 functions as the Acyl-thioester intermediate in the catalytic mechanism. Arg-202 provides a ligand contact to CoA. (3S)-3-hydroxy-3-methylglutaryl-CoA contacts are provided by Thr-204 and His-237. The active-site Proton donor/acceptor is the His-237. Lys-242 contacts CoA. (3S)-3-hydroxy-3-methylglutaryl-CoA contacts are provided by Lys-246, Asn-269, and Ser-299.

It belongs to the thiolase-like superfamily. Archaeal HMG-CoA synthase family. In terms of assembly, interacts with acetoacetyl-CoA thiolase that catalyzes the precedent step in the pathway and with a DUF35 protein. The acetoacetyl-CoA thiolase/HMG-CoA synthase complex channels the intermediate via a fused CoA-binding site, which allows for efficient coupling of the endergonic thiolase reaction with the exergonic HMGCS reaction.

It catalyses the reaction acetoacetyl-CoA + acetyl-CoA + H2O = (3S)-3-hydroxy-3-methylglutaryl-CoA + CoA + H(+). Its pathway is metabolic intermediate biosynthesis; (R)-mevalonate biosynthesis; (R)-mevalonate from acetyl-CoA: step 2/3. In terms of biological role, catalyzes the condensation of acetyl-CoA with acetoacetyl-CoA to form 3-hydroxy-3-methylglutaryl-CoA (HMG-CoA). Functions in the mevalonate (MVA) pathway leading to isopentenyl diphosphate (IPP), a key precursor for the biosynthesis of isoprenoid compounds that are building blocks of archaeal membrane lipids. The chain is Hydroxymethylglutaryl-CoA synthase from Methanosarcina barkeri (strain Fusaro / DSM 804).